The sequence spans 152 residues: SKP1-like protein 12 (152 aa).

Residues 94 to 152 are interaction with the F-box domain of F-box proteins; it reads ILAANYLNIKSLFDLTCQTVADMIKGKTPEEIRSTFNIENDFTPEEEEAVRKENQWAFE.

Belongs to the SKP1 family. In terms of assembly, part of a SCF (SKP1-cullin-F-box) protein ligase complex. Interacts with ADO3/FKF1, COI1/FBL2, EBF1/FBL6, PP2B10, At3g61590 and At5g49610. In terms of tissue distribution, expressed in young seedlings, roots, leaves, floral stems, inflorescences, and siliques, with a slightly higher level in inflorescence than in other tissues.

It localises to the nucleus. It functions in the pathway protein modification; protein ubiquitination. Its function is as follows. Involved in ubiquitination and subsequent proteasomal degradation of target proteins. Together with CUL1, RBX1 and a F-box protein, it forms a SCF E3 ubiquitin ligase complex. The functional specificity of this complex depends on the type of F-box protein. In the SCF complex, it serves as an adapter that links the F-box protein to CUL1. Plays a role during early flowers reproductive development. The sequence is that of SKP1-like protein 12 (ASK12) from Arabidopsis thaliana (Mouse-ear cress).